The chain runs to 133 residues: Large-conductance mechanosensitive channel (133 aa).

Transmembrane regions (helical) follow at residues 14–34 (VIDL…VSSL) and 67–87 (GNFI…FMFV).

This sequence belongs to the MscL family. As to quaternary structure, homopentamer.

The protein resides in the cell membrane. Functionally, channel that opens in response to stretch forces in the membrane lipid bilayer. May participate in the regulation of osmotic pressure changes within the cell. The protein is Large-conductance mechanosensitive channel of Bacillus mycoides (strain KBAB4) (Bacillus weihenstephanensis).